Consider the following 543-residue polypeptide: Rop guanine nucleotide exchange factor 11 (543 aa).

Residues 61 to 89 form a disordered region; that stretch reads QPGKCGSVDRPSLPIGGVTPNRNDKLPRV. The 362-residue stretch at 95 to 456 folds into the PRONE domain; the sequence is MEALIILQAA…QLTQEPTNNA (362 aa).

As to quaternary structure, interacts with ARAC4/ROP2, ARAC3/ROP, ARAC9/ROP8, PHYA and PHYB. In terms of tissue distribution, highly expressed in elongating regions of roots and pollen grains. Expressed in flowers, and at lower levels in leaves and stems.

It localises to the cytoplasm. In terms of biological role, guanine-nucleotide exchange factor (GEF) that acts as an activator of Rop (Rho of plants) GTPases by promoting the exchange of GDP for GTP. Functions as a light-signaling switch that functions in root growth and development through the activation of Rop in a phytochrome-dependent manner. May act as a negative regulator of phytochrome-mediated primary root development. This chain is Rop guanine nucleotide exchange factor 11 (ROPGEF11), found in Arabidopsis thaliana (Mouse-ear cress).